Consider the following 880-residue polypeptide: Alanine--tRNA ligase (880 aa).

Zn(2+)-binding residues include H566, H570, C668, and H672.

It belongs to the class-II aminoacyl-tRNA synthetase family. Requires Zn(2+) as cofactor.

The protein localises to the cytoplasm. The catalysed reaction is tRNA(Ala) + L-alanine + ATP = L-alanyl-tRNA(Ala) + AMP + diphosphate. Its function is as follows. Catalyzes the attachment of alanine to tRNA(Ala) in a two-step reaction: alanine is first activated by ATP to form Ala-AMP and then transferred to the acceptor end of tRNA(Ala). Also edits incorrectly charged Ser-tRNA(Ala) and Gly-tRNA(Ala) via its editing domain. The protein is Alanine--tRNA ligase of Nostoc sp. (strain PCC 7120 / SAG 25.82 / UTEX 2576).